The chain runs to 400 residues: MQMKTLGVSELNNYIKNVIDNDFILKNSKIKGEISNFKIHISGHIYFSLKDKNSKINCIMFRSYARGLKFIPENGDNVILKGRVSVYQKDGAYQFYCEDIEKEGVGDLFIAFEALKKKLYNEGLFDEYNKKEIPRFAKKIGVITSPTGAAVKDIINVSKRRNKGVELLIYPALVQGENAPKDLINGINYFSNRDDIDTIIIARGGGSIEELWAFNNEDLAYAIYNCNKPVISGVGHETDFTICDFVSDRRAPTPSAAAEIGVFNLNEVNTNIENYKNRLYNLIRNTINLKFKELNSLENAIKINSPMNTIANEYIRIDNLKNKLCHKIESKIEYEKIKLSKANSLLNAHNPLNILSRGFSIIKDEKNNVITTKEKIEENTCINITLKDGSTKVRISDVYK.

It belongs to the XseA family. As to quaternary structure, heterooligomer composed of large and small subunits.

The protein resides in the cytoplasm. The enzyme catalyses Exonucleolytic cleavage in either 5'- to 3'- or 3'- to 5'-direction to yield nucleoside 5'-phosphates.. Bidirectionally degrades single-stranded DNA into large acid-insoluble oligonucleotides, which are then degraded further into small acid-soluble oligonucleotides. The polypeptide is Exodeoxyribonuclease 7 large subunit (Clostridium novyi (strain NT)).